The primary structure comprises 218 residues: MNFAIFAFLSFISGSIPFGYWIALRFGKMDIRKFGSKNIGATNVGRSIGWKFGFPVLVLDVAKGIFPVYLSGIYIPEGGVPFQLACGVLAVLGHMFSPFLGFKGGKGVATTLGVFLVLTPIACFGAIFVFLVTIKYFKFVSIGSIFASLTLPLVYAFSSILLLHEEVSYWILGTMVFISIGIILTHRENIFRILNRSELFAVKNEDEERNGDSERNRR.

6 helical membrane passes run 3 to 23, 53 to 73, 82 to 102, 112 to 132, 142 to 162, and 166 to 186; these read FAIF…YWIA, GFPV…LSGI, FQLA…FLGF, LGVF…VFLV, IGSI…SILL, and EVSY…ILTH.

It belongs to the PlsY family. As to quaternary structure, probably interacts with PlsX.

It localises to the cell inner membrane. It catalyses the reaction an acyl phosphate + sn-glycerol 3-phosphate = a 1-acyl-sn-glycero-3-phosphate + phosphate. It functions in the pathway lipid metabolism; phospholipid metabolism. Its function is as follows. Catalyzes the transfer of an acyl group from acyl-phosphate (acyl-PO(4)) to glycerol-3-phosphate (G3P) to form lysophosphatidic acid (LPA). This enzyme utilizes acyl-phosphate as fatty acyl donor, but not acyl-CoA or acyl-ACP. The protein is Glycerol-3-phosphate acyltransferase of Leptospira borgpetersenii serovar Hardjo-bovis (strain JB197).